Here is a 248-residue protein sequence, read N- to C-terminus: AA9 family lytic polysaccharide monooxygenase G (248 aa).

A signal peptide spans methionine 1–alanine 21. Histidine 22 is a Cu(2+) binding site. Asparagine 58 carries an N-linked (GlcNAc...) asparagine glycan. Cysteine 77 and cysteine 195 are oxidised to a cystine. Position 107 (histidine 107) interacts with Cu(2+). Glutamine 190 provides a ligand contact to O2. A Cu(2+)-binding site is contributed by tyrosine 192. N-linked (GlcNAc...) asparagine glycosylation occurs at asparagine 203.

It belongs to the polysaccharide monooxygenase AA9 family. Cu(2+) is required as a cofactor.

The protein resides in the secreted. The enzyme catalyses [(1-&gt;4)-beta-D-glucosyl]n+m + reduced acceptor + O2 = 4-dehydro-beta-D-glucosyl-[(1-&gt;4)-beta-D-glucosyl]n-1 + [(1-&gt;4)-beta-D-glucosyl]m + acceptor + H2O.. In terms of biological role, lytic polysaccharide monooxygenase (LPMO) that depolymerizes crystalline and amorphous polysaccharides via the oxidation of scissile alpha- or beta-(1-4)-glycosidic bonds, yielding C1 or C4 oxidation products. Catalysis by LPMOs requires the reduction of the active-site copper from Cu(II) to Cu(I) by a reducing agent and H(2)O(2) or O(2) as a cosubstrate. The chain is AA9 family lytic polysaccharide monooxygenase G from Malbranchea cinnamomea (Thermophilic fungus).